Consider the following 669-residue polypeptide: Elongation factor G 2 (669 aa).

The region spanning 1–276 (MGIRNIGIMA…SIVDYLPSPF (276 aa)) is the tr-type G domain. Residues 10–17 (AHIDAGKT), 74–78 (DTPGH), and 128–131 (NKMD) contribute to the GTP site.

It belongs to the TRAFAC class translation factor GTPase superfamily. Classic translation factor GTPase family. EF-G/EF-2 subfamily.

The protein resides in the cytoplasm. Functionally, catalyzes the GTP-dependent ribosomal translocation step during translation elongation. During this step, the ribosome changes from the pre-translocational (PRE) to the post-translocational (POST) state as the newly formed A-site-bound peptidyl-tRNA and P-site-bound deacylated tRNA move to the P and E sites, respectively. Catalyzes the coordinated movement of the two tRNA molecules, the mRNA and conformational changes in the ribosome. The chain is Elongation factor G 2 (fusA2) from Borreliella afzelii (strain PKo) (Borrelia afzelii).